The following is a 312-amino-acid chain: Malate dehydrogenase (312 aa).

NAD(+) is bound by residues 7-13 (GAAGGIG) and aspartate 34. Substrate-binding residues include arginine 81 and arginine 87. NAD(+)-binding positions include asparagine 94 and 117-119 (ITN). Residues asparagine 119 and arginine 153 each contribute to the substrate site. Residue histidine 177 is the Proton acceptor of the active site. Methionine 227 is a binding site for NAD(+).

It belongs to the LDH/MDH superfamily. MDH type 1 family. Homodimer.

It carries out the reaction (S)-malate + NAD(+) = oxaloacetate + NADH + H(+). Its function is as follows. Catalyzes the reversible oxidation of malate to oxaloacetate. The chain is Malate dehydrogenase from Citrobacter koseri (strain ATCC BAA-895 / CDC 4225-83 / SGSC4696).